Here is a 172-residue protein sequence, read N- to C-terminus: Protein GrpE (172 aa).

The protein belongs to the GrpE family. Homodimer.

It localises to the cytoplasm. Participates actively in the response to hyperosmotic and heat shock by preventing the aggregation of stress-denatured proteins, in association with DnaK and GrpE. It is the nucleotide exchange factor for DnaK and may function as a thermosensor. Unfolded proteins bind initially to DnaJ; upon interaction with the DnaJ-bound protein, DnaK hydrolyzes its bound ATP, resulting in the formation of a stable complex. GrpE releases ADP from DnaK; ATP binding to DnaK triggers the release of the substrate protein, thus completing the reaction cycle. Several rounds of ATP-dependent interactions between DnaJ, DnaK and GrpE are required for fully efficient folding. In Thermotoga maritima (strain ATCC 43589 / DSM 3109 / JCM 10099 / NBRC 100826 / MSB8), this protein is Protein GrpE.